Here is a 411-residue protein sequence, read N- to C-terminus: MSVLYGIAAATVTATASFLLTAVLAALLRAPALRLAVVDRRRRRPVPLLGGVAVVLVTAVVAWAGDRAGVVPLGPAAGRLLAAATVVGALGLAADVWRLRRRWLLAGTAVAAACVVPYGETGPVAGALAVGWVALVTGAFRGLDHADGVVGTVGVVTAFGVGACAAVELMDGPAVLLLVLAAALAGFLLHNWHPARIALGACGSLFTGFLLTGAAVLARTGYGPVGGAGVLCALTAVPVADAVLVLLSRRLAGRPLSRGGPDHLAHRLRRLGLTAQGVVVVLGGAALCAVVVGVLAHTGRVGGQAALWVAGGAAAGVLGLLRVRVYGPARLRRGAGVRAPVRRAGRGARAWAVVRRPRTAMRRARAGVSQAPRGATGAAGGASFRAAIFPVRQATSTENVQVGAPLRVRNG.

10 consecutive transmembrane segments (helical) span residues 7–27 (IAAA…LAAL), 45–65 (PVPL…AWAG), 70–90 (VVPL…VGAL), 120–140 (ETGP…TGAF), 148–168 (GVVG…AAVE), 169–189 (LMDG…GFLL), 197–217 (IALG…AAVL), 227–247 (GAGV…LVLL), 277–297 (GVVV…VLAH), and 301–321 (VGGQ…LGLL).

The protein belongs to the glycosyltransferase 4 family.

The protein localises to the cell membrane. The polypeptide is Putative glycosyltransferase SCO3672 (Streptomyces coelicolor (strain ATCC BAA-471 / A3(2) / M145)).